A 196-amino-acid chain; its full sequence is Protein LSM12 homolog B (196 aa).

A Sm domain is found at 3–70; the sequence is APGPGEYFSV…LAYVSEVDII (68 aa). The AD domain maps to 81–175; the sequence is ASLNFNKLVN…IVEKHFRDVE (95 aa).

Belongs to the LSM12 family.

The polypeptide is Protein LSM12 homolog B (lsm12b) (Danio rerio (Zebrafish)).